A 162-amino-acid chain; its full sequence is NADH-ubiquinone oxidoreductase 24 kDa subunit homolog C11E3.12, mitochondrial (162 aa).

[2Fe-2S] cluster contacts are provided by cysteine 88, cysteine 93, cysteine 125, and cysteine 129.

It belongs to the complex I 24 kDa subunit family. Requires [2Fe-2S] cluster as cofactor.

The protein resides in the mitochondrion. This chain is NADH-ubiquinone oxidoreductase 24 kDa subunit homolog C11E3.12, mitochondrial, found in Schizosaccharomyces pombe (strain 972 / ATCC 24843) (Fission yeast).